A 143-amino-acid chain; its full sequence is Transcriptional regulator MraZ (143 aa).

SpoVT-AbrB domains are found at residues 5–47 (QYEH…SLEE) and 76–119 (AVEC…SKEV).

The protein belongs to the MraZ family. In terms of assembly, forms oligomers.

The protein localises to the cytoplasm. It localises to the nucleoid. The sequence is that of Transcriptional regulator MraZ from Thermoanaerobacter sp. (strain X514).